Consider the following 131-residue polypeptide: uncharacterized protein (131 aa).

Positions 101 to 131 (SWWPPSGVVRGGPSSWPPSGVAEPREALGLP) are disordered.

This is an uncharacterized protein from Homo sapiens (Human).